A 206-amino-acid chain; its full sequence is uncharacterized protein (206 aa).

Positions 29 to 169 constitute a Nudix hydrolase domain; it reads YWHSTFHCWV…DGVFAEGFIV (141 aa). The Nudix box signature appears at 69–90; it reads AGHIKSGESIEDGVRELKEELG. The Mg(2+) site is built by Glu84 and Glu88.

It belongs to the Nudix hydrolase family. The cofactor is Mg(2+).

This is an uncharacterized protein from Clostridium acetobutylicum (strain ATCC 824 / DSM 792 / JCM 1419 / IAM 19013 / LMG 5710 / NBRC 13948 / NRRL B-527 / VKM B-1787 / 2291 / W).